The primary structure comprises 192 residues: NF-kappa-B inhibitor-interacting Ras-like protein 1 (192 aa).

11-18 is a binding site for GTP; that stretch reads GLLSVGKT. The Effector region signature appears at 35–43; the sequence is DCETMEDVY. The tract at residues 58 to 93 is interactions with NFKBIA and NFKBIB; it reads HLYDTRGLQEGVELPKHYFSFADGFVLVYSVNNLES. GTP contacts are provided by residues 61-65 and 120-123; these read DTRGL and NKID. Residues 168–192 form a disordered region; it reads LSQPQSKSSFPLPGRKNKGNSSSEN.

It belongs to the small GTPase superfamily. Ras family. KappaB-Ras subfamily. In terms of assembly, interacts with both NF-kappa-B inhibitor alpha (NFKBIA) and beta (NFKBIB) in vitro. However, it probably only interacts with NFKBIB in vivo. Forms a complex with NFKBIB and NF-kappa-B heterodimer (p50/NFKB1 and p65/RELA). Also interacts with c-Rel (REL).

It localises to the cytoplasm. Atypical Ras-like protein that acts as a potent regulator of NF-kappa-B activity by preventing the degradation of NF-kappa-B inhibitor beta (NFKBIB) by most signals, explaining why NFKBIB is more resistant to degradation. May act by blocking phosphorylation of NFKBIB and mediating cytoplasmic retention of p65/RELA NF-kappa-B subunit. It is unclear whether it acts as a GTPase. Both GTP- and GDP-bound forms block phosphorylation of NFKBIB. The chain is NF-kappa-B inhibitor-interacting Ras-like protein 1 (NKIRAS1) from Macaca fascicularis (Crab-eating macaque).